Here is a 57-residue protein sequence, read N- to C-terminus: Large ribosomal subunit protein eL20 (57 aa).

Belongs to the eukaryotic ribosomal protein eL20 family. As to quaternary structure, part of the 50S ribosomal subunit. Binds 23S rRNA.

This is Large ribosomal subunit protein eL20 from Archaeoglobus fulgidus (strain ATCC 49558 / DSM 4304 / JCM 9628 / NBRC 100126 / VC-16).